A 422-amino-acid polypeptide reads, in one-letter code: Trichothecene biosynthesis transcription regulator TRI10 (422 aa).

This sequence belongs to the TRI10 transcription regulator family.

It is found in the nucleus. Its function is as follows. Transcriptional activator of all of the trichothecene biosynthesis genes. Acts upstream of the cluster-encoded transcription factor TRI6 and is necessary for full expression of both the other trichothecene genes and the genes for the primary metabolic pathway that precedes the trichothecene biosynthetic pathway. This chain is Trichothecene biosynthesis transcription regulator TRI10, found in Trichoderma arundinaceum.